A 90-amino-acid polypeptide reads, in one-letter code: MAEENVIFVGKKPTMNYVLAIVTQFNNNSTSRIVIKARGKAISKAVDIAEITRHKFIQDAKYDEIKLDTESLQGEKGESNVSSIEIVLTR.

Position 11 is an N6-acetyllysine (K11).

The protein belongs to the histone-like Alba family. Acetylated. Acetylation at Lys-11 decreases DNA-binding affinity.

It localises to the cytoplasm. The protein localises to the chromosome. Binds double-stranded DNA tightly but without sequence specificity. Involved in DNA compaction. The chain is DNA/RNA-binding protein Alba from Picrophilus torridus (strain ATCC 700027 / DSM 9790 / JCM 10055 / NBRC 100828 / KAW 2/3).